The primary structure comprises 1118 residues: Cytospin-A (1118 aa).

The disordered stretch occupies residues 1 to 176 (MKKASRSVGS…SKSKSDNQIS (176 aa)). Residues 29 to 52 (ESGSSLSAVTKLSKPGTSASLLKT) are compositionally biased toward polar residues. Residues 79–119 (STCASTVSSTTGTTMSTLENKPRTVAGSTARRSTSSGTKES) show a composition bias toward low complexity. Composition is skewed to basic and acidic residues over residues 120 to 131 (SSSRERIRDRSR) and 158 to 171 (TNPE…KSKS). Residues 193 to 281 (KTKDVEILHL…LNALGFSLEQ (89 aa)) adopt a coiled-coil conformation. Disordered regions lie at residues 299-324 (ITAG…GSME) and 359-391 (SSDD…NASE). The span at 359–373 (SSDDALDAPSSSESE) shows a compositional bias: low complexity. Coiled-coil stretches lie at residues 396-450 (CLTE…MESL) and 488-808 (RYME…RGRV). 2 disordered regions span residues 856 to 879 (PSPA…PPAA) and 921 to 1002 (TSST…RKDP). The segment covering 937-946 (ESAKSISVSR) has biased composition (low complexity). Residues 947-957 (RSSEEIKRDIS) show a composition bias toward basic and acidic residues. The segment covering 972–991 (TTSPQLSLSSSPTASVTPTT) has biased composition (low complexity). The Calponin-homology (CH) domain maps to 1012 to 1117 (GSKRNALLKW…YVTAIYKYFE (106 aa)).

The protein belongs to the cytospin-A family. May interact with both microtubules and actin cytoskeleton.

The protein localises to the cytoplasm. The protein resides in the cytoskeleton. Its subcellular location is the spindle. It localises to the cell junction. It is found in the gap junction. Its function is as follows. Involved in cytokinesis and spindle organization. May play a role in actin cytoskeleton organization and microtubule stabilization and hence required for proper cell adhesion and migration. This chain is Cytospin-A (SPECC1L), found in Gallus gallus (Chicken).